Here is a 610-residue protein sequence, read N- to C-terminus: Elongation factor 4 (610 aa).

One can recognise a tr-type G domain in the interval 11–193 (EKIRNFSIIA…QIVEKVPAPT (183 aa)). GTP is bound by residues 23–28 (DHGKST) and 140–143 (NKID).

It belongs to the TRAFAC class translation factor GTPase superfamily. Classic translation factor GTPase family. LepA subfamily.

It localises to the cell membrane. The catalysed reaction is GTP + H2O = GDP + phosphate + H(+). In terms of biological role, required for accurate and efficient protein synthesis under certain stress conditions. May act as a fidelity factor of the translation reaction, by catalyzing a one-codon backward translocation of tRNAs on improperly translocated ribosomes. Back-translocation proceeds from a post-translocation (POST) complex to a pre-translocation (PRE) complex, thus giving elongation factor G a second chance to translocate the tRNAs correctly. Binds to ribosomes in a GTP-dependent manner. This Streptococcus pyogenes serotype M3 (strain ATCC BAA-595 / MGAS315) protein is Elongation factor 4.